Reading from the N-terminus, the 175-residue chain is Probable DNA-directed RNA polymerase subunit delta (175 aa).

Residues C14–W81 enclose the HTH HARE-type domain. The disordered stretch occupies residues I91–L175. The span at D106–L175 shows a compositional bias: acidic residues.

This sequence belongs to the RpoE family. In terms of assembly, RNAP is composed of a core of 2 alpha, a beta and a beta' subunits. The core is associated with a delta subunit and one of several sigma factors.

Functionally, participates in both the initiation and recycling phases of transcription. In the presence of the delta subunit, RNAP displays an increased specificity of transcription, a decreased affinity for nucleic acids, and an increased efficiency of RNA synthesis because of enhanced recycling. This chain is Probable DNA-directed RNA polymerase subunit delta, found in Bacillus anthracis.